A 416-amino-acid polypeptide reads, in one-letter code: Glutamate dehydrogenase A2 (416 aa).

Residue Lys-105 is part of the active site.

Belongs to the Glu/Leu/Phe/Val dehydrogenases family. In terms of assembly, homohexamer.

The chain is Glutamate dehydrogenase A2 (gdhA2) from Halobacterium salinarum (strain ATCC 700922 / JCM 11081 / NRC-1) (Halobacterium halobium).